Here is a 273-residue protein sequence, read N- to C-terminus: S-adenosylmethionine decarboxylase proenzyme (273 aa).

Ser-118 (schiff-base intermediate with substrate; via pyruvic acid) is an active-site residue. Residue Ser-118 is modified to Pyruvic acid (Ser); by autocatalysis. His-123 serves as the catalytic Proton acceptor; for processing activity. Cys-146 functions as the Proton donor; for catalytic activity in the catalytic mechanism.

The protein belongs to the prokaryotic AdoMetDC family. Type 2 subfamily. As to quaternary structure, heterooctamer of four alpha and four beta chains arranged as a tetramer of alpha/beta heterodimers. Requires pyruvate as cofactor. Is synthesized initially as an inactive proenzyme. Formation of the active enzyme involves a self-maturation process in which the active site pyruvoyl group is generated from an internal serine residue via an autocatalytic post-translational modification. Two non-identical subunits are generated from the proenzyme in this reaction, and the pyruvate is formed at the N-terminus of the alpha chain, which is derived from the carboxyl end of the proenzyme. The post-translation cleavage follows an unusual pathway, termed non-hydrolytic serinolysis, in which the side chain hydroxyl group of the serine supplies its oxygen atom to form the C-terminus of the beta chain, while the remainder of the serine residue undergoes an oxidative deamination to produce ammonia and the pyruvoyl group blocking the N-terminus of the alpha chain.

The enzyme catalyses S-adenosyl-L-methionine + H(+) = S-adenosyl 3-(methylsulfanyl)propylamine + CO2. It participates in amine and polyamine biosynthesis; S-adenosylmethioninamine biosynthesis; S-adenosylmethioninamine from S-adenosyl-L-methionine: step 1/1. Catalyzes the decarboxylation of S-adenosylmethionine to S-adenosylmethioninamine (dcAdoMet), the propylamine donor required for the synthesis of the polyamines spermine and spermidine from the diamine putrescine. The polypeptide is S-adenosylmethionine decarboxylase proenzyme (Alkalilimnicola ehrlichii (strain ATCC BAA-1101 / DSM 17681 / MLHE-1)).